We begin with the raw amino-acid sequence, 176 residues long: ATP-dependent protease subunit HslV (176 aa).

The active site involves Thr2. Na(+) contacts are provided by Gly157, Cys160, and Thr163.

The protein belongs to the peptidase T1B family. HslV subfamily. In terms of assembly, a double ring-shaped homohexamer of HslV is capped on each side by a ring-shaped HslU homohexamer. The assembly of the HslU/HslV complex is dependent on binding of ATP.

The protein resides in the cytoplasm. The catalysed reaction is ATP-dependent cleavage of peptide bonds with broad specificity.. Its activity is regulated as follows. Allosterically activated by HslU binding. Its function is as follows. Protease subunit of a proteasome-like degradation complex believed to be a general protein degrading machinery. The protein is ATP-dependent protease subunit HslV of Photorhabdus laumondii subsp. laumondii (strain DSM 15139 / CIP 105565 / TT01) (Photorhabdus luminescens subsp. laumondii).